The following is a 284-amino-acid chain: Phosphatidylserine decarboxylase proenzyme (284 aa).

Catalysis depends on charge relay system; for autoendoproteolytic cleavage activity residues Asp88, His145, and Ser248. Residue Ser248 is the Schiff-base intermediate with substrate; via pyruvic acid; for decarboxylase activity of the active site. Position 248 is a pyruvic acid (Ser); by autocatalysis (Ser248).

The protein belongs to the phosphatidylserine decarboxylase family. PSD-B subfamily. Prokaryotic type I sub-subfamily. In terms of assembly, heterodimer of a large membrane-associated beta subunit and a small pyruvoyl-containing alpha subunit. Pyruvate serves as cofactor. Is synthesized initially as an inactive proenzyme. Formation of the active enzyme involves a self-maturation process in which the active site pyruvoyl group is generated from an internal serine residue via an autocatalytic post-translational modification. Two non-identical subunits are generated from the proenzyme in this reaction, and the pyruvate is formed at the N-terminus of the alpha chain, which is derived from the carboxyl end of the proenzyme. The autoendoproteolytic cleavage occurs by a canonical serine protease mechanism, in which the side chain hydroxyl group of the serine supplies its oxygen atom to form the C-terminus of the beta chain, while the remainder of the serine residue undergoes an oxidative deamination to produce ammonia and the pyruvoyl prosthetic group on the alpha chain. During this reaction, the Ser that is part of the protease active site of the proenzyme becomes the pyruvoyl prosthetic group, which constitutes an essential element of the active site of the mature decarboxylase.

The protein localises to the cell membrane. It carries out the reaction a 1,2-diacyl-sn-glycero-3-phospho-L-serine + H(+) = a 1,2-diacyl-sn-glycero-3-phosphoethanolamine + CO2. Its pathway is phospholipid metabolism; phosphatidylethanolamine biosynthesis; phosphatidylethanolamine from CDP-diacylglycerol: step 2/2. In terms of biological role, catalyzes the formation of phosphatidylethanolamine (PtdEtn) from phosphatidylserine (PtdSer). This is Phosphatidylserine decarboxylase proenzyme from Albidiferax ferrireducens (strain ATCC BAA-621 / DSM 15236 / T118) (Rhodoferax ferrireducens).